A 462-amino-acid chain; its full sequence is MSIKRLSMRLKKGIHRSWNRMTSLEAGLEEEKEIKIVEEPEPRPWKVLITGGAGHLAENLVAKLEEMTRDSIRPKIREMLEKEMPAVISTKVDKEVEKRLPMYIQIVLVDVLEPRGRVLKHHVAFVKCSFDDECTMKTALEQVDTVYHLAAVGMTGQYARDRKACMDINAVGTMNLLIWARNSGVQRFIYTSSVGVVFSGEPMYNATEEVGYPDDFYNYYCESKAHAERIVQKASGHRMRTTVLRFNGIYGPGEKRVTERVVKFMLTGMWIATCKPNGVEAQTQLSSVANCIQGLVKAELALRWSDTPHGQIYNIMDKTPVGTFSFWTPLNIALGFSSSMITVPATPIRLFAYLSQIIADRMRIDPIVSVLEVDLLLVNNTFNIEKAERDLGYEPSVSAIPEIIEHYLHRLPPDVVRPKGRSDFYVKVAVLVLGTILIFVAVFSFTFWMYLIFQRLSRWNPF.

NAD(+)-binding positions include 51–56, Tyr-220, and Lys-224; that span reads GGAGHL. The Proton donor role is filled by Lys-224. The next 2 helical transmembrane spans lie at 321-341 and 428-448; these read VGTF…SSMI and VAVL…FTFW.

The protein belongs to the 3-beta-HSD family. Expressed exclusively in the neuron-like XXX(L/R) cells through all four larval stages and becomes fainter in adults.

Its subcellular location is the membrane. It catalyses the reaction a 3beta-hydroxy-Delta(5)-steroid + NAD(+) = a 3-oxo-Delta(5)-steroid + NADH + H(+). The catalysed reaction is cholesterol + NAD(+) = cholest-5-en-3-one + NADH + H(+). The enzyme catalyses a 3-oxo-Delta(5)-steroid = a 3-oxo-Delta(4)-steroid. It carries out the reaction cholest-5-en-3-one = cholest-4-en-3-one. It participates in steroid hormone biosynthesis; dafachronic acid biosynthesis. In terms of biological role, hydroxysteroid dehydrogenase involved in the biosynthesis of dafrachonic acids. Catalyzes the dehydrogenation of cholesterol or its derivatives and the isomerization of the double carbon bond on the sterol ring. Modifies sterols into a Delta(4)-3-keto-sterols such as cholest-4-en-3-one, precursor of Delta(4)-dafachronic acid. Contributes to the production of Delta(7)-dafachronic acid in the XXX cells. Dafachronic acids act as ligands and bind directly to the nuclear hormone receptor (NHR) daf-12 suppressing dauer formation and inducing reproductive growth. Acts in parallel to AKT-1 to promote reproductive development via DAF-16/FoxO and DAF-12. The sequence is that of 3beta-hydroxysteroid dehydrogenase/Delta(5)-Delta(4) isomerase 1 from Caenorhabditis elegans.